A 552-amino-acid polypeptide reads, in one-letter code: Asparagine--tRNA ligase, cytoplasmic (552 aa).

The tract at residues M1–Q23 is disordered. Residues A12 to Q23 show a composition bias toward polar residues.

The protein belongs to the class-II aminoacyl-tRNA synthetase family.

The protein resides in the cytoplasm. It carries out the reaction tRNA(Asn) + L-asparagine + ATP = L-asparaginyl-tRNA(Asn) + AMP + diphosphate + H(+). The chain is Asparagine--tRNA ligase, cytoplasmic (DED81) from Debaryomyces hansenii (strain ATCC 36239 / CBS 767 / BCRC 21394 / JCM 1990 / NBRC 0083 / IGC 2968) (Yeast).